Reading from the N-terminus, the 37-residue chain is Cytochrome b6-f complex subunit 5 (37 aa).

Residues 5-25 (LLSGIVLGLVPVTITGLFVAA) form a helical membrane-spanning segment.

The protein belongs to the PetG family. In terms of assembly, the 4 large subunits of the cytochrome b6-f complex are cytochrome b6, subunit IV (17 kDa polypeptide, PetD), cytochrome f and the Rieske protein, while the 4 small subunits are PetG, PetL, PetM and PetN. The complex functions as a dimer.

Its subcellular location is the plastid. It localises to the chloroplast thylakoid membrane. Its function is as follows. Component of the cytochrome b6-f complex, which mediates electron transfer between photosystem II (PSII) and photosystem I (PSI), cyclic electron flow around PSI, and state transitions. PetG is required for either the stability or assembly of the cytochrome b6-f complex. This chain is Cytochrome b6-f complex subunit 5, found in Emiliania huxleyi (Coccolithophore).